A 421-amino-acid chain; its full sequence is UDP-N-acetylglucosamine 1-carboxyvinyltransferase 1 (421 aa).

22-23 serves as a coordination point for phosphoenolpyruvate; sequence KN. Arg94 contacts UDP-N-acetyl-alpha-D-glucosamine. Cys118 acts as the Proton donor in catalysis. Cys118 is subject to 2-(S-cysteinyl)pyruvic acid O-phosphothioketal. Residues 123–127, Asp310, and Val332 contribute to the UDP-N-acetyl-alpha-D-glucosamine site; that span reads RPIEL.

The protein belongs to the EPSP synthase family. MurA subfamily.

The protein localises to the cytoplasm. The enzyme catalyses phosphoenolpyruvate + UDP-N-acetyl-alpha-D-glucosamine = UDP-N-acetyl-3-O-(1-carboxyvinyl)-alpha-D-glucosamine + phosphate. It participates in cell wall biogenesis; peptidoglycan biosynthesis. Its function is as follows. Cell wall formation. Adds enolpyruvyl to UDP-N-acetylglucosamine. The chain is UDP-N-acetylglucosamine 1-carboxyvinyltransferase 1 from Clostridium perfringens (strain 13 / Type A).